A 507-amino-acid chain; its full sequence is MQKVSGSGKKTTAFQQRKSDSVYNNNEMNKGTSSISYDPVYFVRDASSFTKTTHERAASVKLKLEHLYKVTVEQTVERNQRRMDFEAKLAQDRGSEERKKRQLNSLGQKESQFLRLRRTKLSLNDFHTVKVIGKGAFGEVRLVQKIDTGKIYAMKTLLKSEMFKKDQLAHVKAERDVLAESDSPWVVSLYYSFQDSQYLYLIMEFLPGGDLMTMLIKYDTFSEDVTRFYIAECILAIEAVHKLGFIHRDIKPDNILIDKTGHIKLSDFGLSMGFHKTHDNAYYQRLFESKINTSTSSTQNSLMVDTISLTMSSKDKIATWKKNRRIMAYSTVGTPDYIAPEIFTQHGYGQECDWWSLGAIMFECLIGWPPFCSENAHETYRKIINWRENLYFPEDLHLSAEAEDLIRKLLTSADQRLGRYGANDIKLHPFFRGVNWDTIREINAPFIPQLKSITDTSYFEEIDTIPNITMNSPPVLQNKIPSDVDQNLAFVGYTYKRFDMMTQKGIL.

The tract at residues 1 to 30 (MQKVSGSGKKTTAFQQRKSDSVYNNNEMNK) is disordered. Positions 126–431 (FHTVKVIGKG…ANDIKLHPFF (306 aa)) constitute a Protein kinase domain. Residues 132 to 140 (IGKGAFGEV) and Lys155 contribute to the ATP site. Asp249 acts as the Proton acceptor in catalysis. The region spanning 432 to 505 (RGVNWDTIRE…KRFDMMTQKG (74 aa)) is the AGC-kinase C-terminal domain.

The protein belongs to the protein kinase superfamily. STE Ser/Thr protein kinase family. COT1 subfamily.

The catalysed reaction is L-seryl-[protein] + ATP = O-phospho-L-seryl-[protein] + ADP + H(+). The enzyme catalyses L-threonyl-[protein] + ATP = O-phospho-L-threonyl-[protein] + ADP + H(+). Functionally, protein kinase that seems to play a role in signaling pathways necessary for cell growth and mating. This is Serine/threonine-protein kinase CBK1 (CBK1) from Pneumocystis carinii.